The chain runs to 49 residues: Large ribosomal subunit protein bL33D (49 aa).

Belongs to the bacterial ribosomal protein bL33 family.

The protein is Large ribosomal subunit protein bL33D (rpmG4) of Enterococcus faecalis (strain ATCC 700802 / V583).